Consider the following 78-residue polypeptide: TauPI-stichotoxin-Hcr2b (78 aa).

The N-terminal stretch at 1 to 22 (MKGTFLICLILIAGFSFKSTQA) is a signal peptide. The BPTI/Kunitz inhibitor domain occupies 26 to 76 (CLEPKVVGPCTAYFRRFYFDSETGKCTVFIYGGCEGNGNNFETLRACRAIC). Cystine bridges form between C26–C76, C35–C59, and C51–C72.

This sequence belongs to the venom Kunitz-type family. Sea anemone type 2 potassium channel toxin subfamily.

Its subcellular location is the secreted. It localises to the nematocyst. Its function is as follows. This protease inhibitor shows two different activities, it inhibits both the capsaicin receptor TRPV1 and serine proteases. It partially (max 50%) and reversibly inhibits capsaicin-induced response of TRPV1 (IC(50)=54 nM), a receptor of the pain pathway. The second activity is a weak inhibition of trypsin and chymotrypsin activity (Ki=1 uM and Ki=5 uM, respectively). In vivo, it shows antinociceptive and analgesic activities. It significantly prolongs tail-flick latency and reduces capsaicin-induced acute pain. In vivo, unlike other TRPV1 antagonists whose activity is associated with hyperthermia, this protein has the remarkable feature of dropping core body temperature. The polypeptide is TauPI-stichotoxin-Hcr2b (Radianthus crispa (Leathery sea anemone)).